A 613-amino-acid chain; its full sequence is DNA mismatch repair protein MutL (613 aa).

Belongs to the DNA mismatch repair MutL/HexB family.

This protein is involved in the repair of mismatches in DNA. It is required for dam-dependent methyl-directed DNA mismatch repair. May act as a 'molecular matchmaker', a protein that promotes the formation of a stable complex between two or more DNA-binding proteins in an ATP-dependent manner without itself being part of a final effector complex. This is DNA mismatch repair protein MutL from Janthinobacterium sp. (strain Marseille) (Minibacterium massiliensis).